We begin with the raw amino-acid sequence, 310 residues long: Iron ABC transporter substrate-binding lipoprotein MtsA (310 aa).

The first 20 residues, 1-20 (MGKKMSLILGAFLSVFLLVA), serve as a signal peptide directing secretion. Residue cysteine 21 is the site of N-palmitoyl cysteine attachment. Cysteine 21 is lipidated: S-diacylglycerol cysteine. Fe(2+) contacts are provided by histidine 68, histidine 140, glutamate 206, and aspartate 281.

It belongs to the bacterial solute-binding protein 9 family. Lipoprotein receptor antigen (Lrai) subfamily.

The protein localises to the cell membrane. Functionally, part of the ATP-binding cassette (ABC) transport system MtsABC involved in iron import. Binds iron with high affinity and specificity and delivers it to the membrane permease for translocation into the cytoplasm. Has low affinity for Zn(2+) and Cu(2+). The polypeptide is Iron ABC transporter substrate-binding lipoprotein MtsA (mtsA) (Streptococcus pyogenes serotype M6 (strain ATCC BAA-946 / MGAS10394)).